The chain runs to 171 residues: MKTYRRQIREKILQALYTIEIRDTDIDSAAGWLLTEEILADPNAMKFFNMLLKNIKEHMEEIDRYIVKHTFNWDMSRIAIIDKNIIRMALTEILYCEDIPPKVSINEAIEIAKKFNSTDKSSKFVNGILDAIFNDLKNEGKVHKNGRGLIDQSVTKLQKVEGEGENPESAS.

It belongs to the NusB family.

Functionally, involved in transcription antitermination. Required for transcription of ribosomal RNA (rRNA) genes. Binds specifically to the boxA antiterminator sequence of the ribosomal RNA (rrn) operons. The chain is Transcription antitermination protein NusB from Pelodictyon phaeoclathratiforme (strain DSM 5477 / BU-1).